The following is a 931-amino-acid chain: Transportin (931 aa).

19 HEAT repeats span residues 10-37 (GLKQ…EELD), 42-79 (VPDY…QYFE), 88-121 (YIKR…KSCF), 127-164 (LLPA…LDSD), 171-201 (NQLI…YFII), 214-241 (FLKG…VTLV), 253-280 (KDVI…FWTA), 296-421 (PVLV…LSGI), 430-459 (VTLP…GAIA), 471-498 (SKVI…TLSR), 512-545 (LHPL…EEEA), 553-586 (LQMI…AKVV), 594-632 (ELIN…SSIG), 640-693 (SLFF…GIGT), 704-735 (LPHL…KFCL), 743-776 (PDYL…IRMP), 784-819 (VAIR…IVSP), 827-860 (DKFI…INNN), and 869-900 (VYIC…KTSM). The 68-residue stretch at 32–99 (IREELDKFHS…KREILPVLSD (68 aa)) folds into the Importin N-terminal domain. The disordered stretch occupies residues 317–401 (DQGDDSMTPD…DDDDDDDGFE (85 aa)). Over residues 358–381 (DNNNNSNNNNSSNNNSSNNNNNNN) the composition is skewed to low complexity. Residues 382 to 401 (NEDDEEYNDDDDDDDDDGFE) show a composition bias toward acidic residues.

Belongs to the importin beta family. Importin beta-2 subfamily. In terms of assembly, forms a complex with an importin alpha subunit.

The protein localises to the cytoplasm. It is found in the nucleus envelope. Functions in nuclear protein import via a substrate-importin alpha-beta transport complex that passes though the nuclear pore complexes (NPC). Mediates docking of the substrate-importin complex to distinct nucleoporins. The polypeptide is Transportin (tnpo) (Dictyostelium discoideum (Social amoeba)).